The primary structure comprises 514 residues: F-box-like/WD repeat-containing protein TBL1XR1 (514 aa).

Residue serine 2 is modified to N-acetylserine. Residues 4–36 (SSDEVNFLVYRYLQESGFSHSAFTFGIESHISQ) enclose the LisH domain. The 46-residue stretch at 41–86 (GALVPPAALISIIQKGLQYVEAEVSINEDGTLFDGRPIESLSLIDA) folds into the F-box-like domain. Lysine 102 bears the N6-acetyllysine mark. The segment at 114–139 (AAAATNQQGSAKNGENTANGEENGAH) is disordered. The segment covering 124-135 (AKNGENTANGEE) has biased composition (low complexity). WD repeat units follow at residues 167 to 206 (GHES…TSGP), 223 to 262 (PSNK…ASTL), 264 to 303 (QHKG…AKQQ), 306 to 344 (FHSA…PIKT), 347 to 386 (GHTN…CVHD), 389 to 437 (AHNK…CIHT), 440 to 479 (KHQE…LVHS), and 481 to 513 (RGTG…LDLR). Lysine 277 is covalently cross-linked (Glycyl lysine isopeptide (Lys-Gly) (interchain with G-Cter in SUMO2)).

This sequence belongs to the WD repeat EBI family. In terms of assembly, component of the N-Cor repressor complex, at least composed of NCOR1, NCOR2, HDAC3, TBL1X, TBL1XR1, CORO2A and GPS2. Probable component of some E3 ubiquitin ligase complex. Interacts with histones H2B and H4. Interacts with MECP2; bridges interaction between MECP2 and NCOR1. Interacts with USP44.

The protein resides in the nucleus. Its function is as follows. F-box-like protein involved in the recruitment of the ubiquitin/19S proteasome complex to nuclear receptor-regulated transcription units. Plays an essential role in transcription activation mediated by nuclear receptors. Probably acts as integral component of the N-Cor corepressor complex that mediates the recruitment of the 19S proteasome complex, leading to the subsequent proteasomal degradation of N-Cor complex, thereby allowing cofactor exchange, and transcription activation. This Mus musculus (Mouse) protein is F-box-like/WD repeat-containing protein TBL1XR1 (Tbl1xr1).